We begin with the raw amino-acid sequence, 492 residues long: MTAHFPFDNSYVALPPNFFARVAPTPVAAPRLIKLNRPLAVQLGLDPDLLETPEGAEILSGNQMPETAASIAMAYAGHQFGNFVPQLGDGRAILLGEVVDRNGVRRDIQLKGAGRTPFSRMGDGRAALGPVLREYIVSEAMAALGIPTTRSLAAVLTGETVLRDPIQPGAVLTRVASSHIRVGTFQYFAARGDLASVRALADHAIARHYPEAAQAPSPYLALLEGVIGRQAELVASWMMVGFIHGVMNTDNCSVAGETIDYGPCAFMDTFDPKTVYSSIDQFGRYAYGNQPPIALWNLTRLAECLVRLLADDDDKGIEIAQTALGGFAEQFNAAYLAKLAAKLGLFTSQPDDQQLSQEFLTALAKGEADFTLAFRRLSDAAVDPSDLGEVRALFADPAAFDEWAPRWRARIATEPQDATTRQAAMRRVNPAYIPRNHRIEAVIRAAVDRDDFAPFEEILTVLANPFEEKAEFARYAEPPQPHEQVLETFCGT.

Residues Gly88, Gly90, Arg91, Lys111, Asp123, Gly124, Arg174, and Arg181 each coordinate ATP. The Proton acceptor role is filled by Asp250. Mg(2+) contacts are provided by Asn251 and Asp260. An ATP-binding site is contributed by Asp260.

This sequence belongs to the SELO family. Mg(2+) serves as cofactor. Requires Mn(2+) as cofactor.

The enzyme catalyses L-seryl-[protein] + ATP = 3-O-(5'-adenylyl)-L-seryl-[protein] + diphosphate. It carries out the reaction L-threonyl-[protein] + ATP = 3-O-(5'-adenylyl)-L-threonyl-[protein] + diphosphate. It catalyses the reaction L-tyrosyl-[protein] + ATP = O-(5'-adenylyl)-L-tyrosyl-[protein] + diphosphate. The catalysed reaction is L-histidyl-[protein] + UTP = N(tele)-(5'-uridylyl)-L-histidyl-[protein] + diphosphate. The enzyme catalyses L-seryl-[protein] + UTP = O-(5'-uridylyl)-L-seryl-[protein] + diphosphate. It carries out the reaction L-tyrosyl-[protein] + UTP = O-(5'-uridylyl)-L-tyrosyl-[protein] + diphosphate. In terms of biological role, nucleotidyltransferase involved in the post-translational modification of proteins. It can catalyze the addition of adenosine monophosphate (AMP) or uridine monophosphate (UMP) to a protein, resulting in modifications known as AMPylation and UMPylation. This chain is Protein nucleotidyltransferase YdiU, found in Rhodopseudomonas palustris (strain ATCC BAA-98 / CGA009).